The sequence spans 294 residues: Protein farnesyltransferase/geranylgeranyltransferase type-1 subunit alpha (294 aa).

PFTA repeat units lie at residues 57-91 (YSLR…HTPS), 92-125 (YIDN…SLTK), 126-160 (NYER…NFND), 161-194 (YSQE…ETSK), and 199-233 (SLEE…KSGP).

The protein belongs to the protein prenyltransferase subunit alpha family. As to quaternary structure, heterodimer of an alpha(cwp1) and a beta(cpp1 or cwg2) subunit. Mg(2+) serves as cofactor.

It catalyses the reaction L-cysteinyl-[protein] + (2E,6E)-farnesyl diphosphate = S-(2E,6E)-farnesyl-L-cysteinyl-[protein] + diphosphate. The enzyme catalyses geranylgeranyl diphosphate + L-cysteinyl-[protein] = S-geranylgeranyl-L-cysteinyl-[protein] + diphosphate. Functionally, catalyzes the transfer of a farnesyl or geranyl-geranyl moiety from farnesyl or geranyl-geranyl diphosphate to a cysteine at the fourth position from the C-terminus of several proteins having the C-terminal sequence Cys-aliphatic-aliphatic-X. The alpha(cwp1) subunit is thought to participate in a stable complex with the substrate. The beta(cpp1 or cwg2) subunits bind the peptide substrate. In Schizosaccharomyces pombe (strain 972 / ATCC 24843) (Fission yeast), this protein is Protein farnesyltransferase/geranylgeranyltransferase type-1 subunit alpha (cwp1).